A 118-amino-acid polypeptide reads, in one-letter code: UPF0295 protein GWCH70_0499 (118 aa).

The next 2 membrane-spanning stretches (helical) occupy residues 12–32 and 42–62; these read IRTF…IGIF and LFMI…FWIG.

The protein belongs to the UPF0295 family.

It localises to the cell membrane. The protein is UPF0295 protein GWCH70_0499 of Geobacillus sp. (strain WCH70).